Consider the following 550-residue polypeptide: Hydroxylamine reductase (550 aa).

Residues cysteine 3, cysteine 6, cysteine 18, and cysteine 25 each coordinate [2Fe-2S] cluster. Residues histidine 249, glutamate 273, cysteine 317, cysteine 405, cysteine 433, cysteine 458, glutamate 492, and lysine 494 each contribute to the hybrid [4Fe-2O-2S] cluster site. Position 405 is a cysteine persulfide (cysteine 405).

This sequence belongs to the HCP family. It depends on [2Fe-2S] cluster as a cofactor. Hybrid [4Fe-2O-2S] cluster is required as a cofactor.

Its subcellular location is the cytoplasm. It catalyses the reaction A + NH4(+) + H2O = hydroxylamine + AH2 + H(+). Its function is as follows. Catalyzes the reduction of hydroxylamine to form NH(3) and H(2)O. The protein is Hydroxylamine reductase of Salmonella paratyphi A (strain ATCC 9150 / SARB42).